A 550-amino-acid chain; its full sequence is Arginine--tRNA ligase (550 aa).

A 'HIGH' region motif is present at residues 130 to 140 (ANPTGPIHLGG).

The protein belongs to the class-I aminoacyl-tRNA synthetase family. In terms of assembly, monomer.

The protein localises to the cytoplasm. It carries out the reaction tRNA(Arg) + L-arginine + ATP = L-arginyl-tRNA(Arg) + AMP + diphosphate. This chain is Arginine--tRNA ligase, found in Corynebacterium diphtheriae (strain ATCC 700971 / NCTC 13129 / Biotype gravis).